A 157-amino-acid polypeptide reads, in one-letter code: dCTP deaminase (157 aa).

DCTP contacts are provided by residues 79–84 (RSSLAR), Asp-95, Gln-124, and Tyr-138.

Belongs to the dCTP deaminase family. As to quaternary structure, homotrimer.

It carries out the reaction dCTP + H2O + H(+) = dUTP + NH4(+). It participates in pyrimidine metabolism; dUMP biosynthesis; dUMP from dCTP (dUTP route): step 1/2. Its function is as follows. Catalyzes the deamination of dCTP to dUTP. The polypeptide is dCTP deaminase (Thermococcus gammatolerans (strain DSM 15229 / JCM 11827 / EJ3)).